A 159-amino-acid chain; its full sequence is U1 small nuclear ribonucleoprotein C (159 aa).

The segment at 4 to 36 adopts a Matrin-type zinc-finger fold; sequence FYCDYCDTYLTHDSPSVRKTHCSGRKHKENVKD. Tyr-8 carries the post-translational modification Phosphotyrosine. Position 17 is a phosphoserine (Ser-17). At Lys-52 the chain carries N6-acetyllysine. Disordered regions lie at residues 62–96 and 140–159; these read IPPT…PAPH and RPPA…RPDR. Residues 63-92 show a composition bias toward pro residues; sequence PPTPFSAPPPAGAMIPPPPSLPGPPRPGMM.

Belongs to the U1 small nuclear ribonucleoprotein C family. Component of the U1 snRNP. The U1 snRNP is composed of the U1 snRNA and the 7 core Sm proteins SNRPB, SNRPD1, SNRPD2, SNRPD3, SNRPE, SNRPF and SNRPG that assemble in a heptameric protein ring on the Sm site of the small nuclear RNA to form the core snRNP, and at least 3 U1 snRNP-specific proteins SNRNP70/U1-70K, SNRPA/U1-A and SNRPC/U1-C. SNRPC/U1-C interacts with U1 snRNA and the 5' splice-site region of the pre-mRNA. Interacts (via N-terminus) with TIA1 (via C-terminus); thereby promoting spliceosomal U1 snRNP recruitment to 5' splice sites.

The protein resides in the nucleus. In terms of biological role, component of the spliceosomal U1 snRNP, which is essential for recognition of the pre-mRNA 5' splice-site and the subsequent assembly of the spliceosome. SNRPC/U1-C is directly involved in initial 5' splice-site recognition for both constitutive and regulated alternative splicing. The interaction with the 5' splice-site seems to precede base-pairing between the pre-mRNA and the U1 snRNA. Stimulates commitment or early (E) complex formation by stabilizing the base pairing of the 5' end of the U1 snRNA and the 5' splice-site region. This Homo sapiens (Human) protein is U1 small nuclear ribonucleoprotein C.